We begin with the raw amino-acid sequence, 249 residues long: Ribonuclease 3 (249 aa).

Residues 20–149 (FKEFQERISV…FIGALYLDQG (130 aa)) enclose the RNase III domain. Glu-62 is a binding site for Mg(2+). Residue Asp-66 is part of the active site. Mg(2+)-binding residues include Asp-135 and Glu-138. Glu-138 is an active-site residue. Residues 175 to 244 (DFKSQLQEFV…AQEALAKMQK (70 aa)) enclose the DRBM domain. The tract at residues 223–249 (NGRSKKEAEQHAAQEALAKMQKHHTKQ) is disordered.

It belongs to the ribonuclease III family. As to quaternary structure, homodimer. Mg(2+) is required as a cofactor.

Its subcellular location is the cytoplasm. The enzyme catalyses Endonucleolytic cleavage to 5'-phosphomonoester.. Digests double-stranded RNA. Involved in the processing of primary rRNA transcript to yield the immediate precursors to the large and small rRNAs (23S and 16S). Processes some mRNAs, and tRNAs when they are encoded in the rRNA operon. Processes pre-crRNA and tracrRNA of type II CRISPR loci if present in the organism. The polypeptide is Ribonuclease 3 (Bacillus velezensis (strain DSM 23117 / BGSC 10A6 / LMG 26770 / FZB42) (Bacillus amyloliquefaciens subsp. plantarum)).